The following is a 297-amino-acid chain: UDP-N-acetylenolpyruvoylglucosamine reductase (297 aa).

Positions 26-191 (KSGGTADWLF…VAARFRGHPG (166 aa)) constitute an FAD-binding PCMH-type domain. R171 is a catalytic residue. S220 functions as the Proton donor in the catalytic mechanism. The active site involves E290.

It belongs to the MurB family. FAD is required as a cofactor.

It localises to the cytoplasm. The catalysed reaction is UDP-N-acetyl-alpha-D-muramate + NADP(+) = UDP-N-acetyl-3-O-(1-carboxyvinyl)-alpha-D-glucosamine + NADPH + H(+). It participates in cell wall biogenesis; peptidoglycan biosynthesis. In terms of biological role, cell wall formation. This Novosphingobium aromaticivorans (strain ATCC 700278 / DSM 12444 / CCUG 56034 / CIP 105152 / NBRC 16084 / F199) protein is UDP-N-acetylenolpyruvoylglucosamine reductase.